Reading from the N-terminus, the 754-residue chain is uncharacterized protein (754 aa).

The tract at residues 1-110 (MNKGQNQVVP…RNMLGSLQKT (110 aa)) is disordered. Polar residues predominate over residues 15–25 (FGGQNPPQLSS). Residues 26-35 (IPPIVNPVVV) show a composition bias toward low complexity. The segment covering 36-46 (QNRTSPGTPFI) has biased composition (polar residues). Basic and acidic residues predominate over residues 49-60 (KAKEIYNRRQQE). Positions 62 to 72 (ISSDSEEEESP) are enriched in acidic residues. A compositionally biased stretch (basic and acidic residues) spans 76-93 (AKSKYSRDSRDSRDTRDS).

Its subcellular location is the virion. This is an uncharacterized protein from Acanthamoeba polyphaga mimivirus (APMV).